A 339-amino-acid chain; its full sequence is Quinolinate synthase (339 aa).

The iminosuccinate site is built by His-63 and Ser-81. Cys-126 lines the [4Fe-4S] cluster pocket. Residues Tyr-152–Asn-154 and Ser-169 contribute to the iminosuccinate site. Cys-211 is a [4Fe-4S] cluster binding site. Residues His-237 to Glu-239 and Thr-254 each bind iminosuccinate. Cys-297 lines the [4Fe-4S] cluster pocket.

The protein belongs to the quinolinate synthase family. Type 2 subfamily. [4Fe-4S] cluster is required as a cofactor.

Its subcellular location is the cytoplasm. The catalysed reaction is iminosuccinate + dihydroxyacetone phosphate = quinolinate + phosphate + 2 H2O + H(+). Its pathway is cofactor biosynthesis; NAD(+) biosynthesis; quinolinate from iminoaspartate: step 1/1. Its function is as follows. Catalyzes the condensation of iminoaspartate with dihydroxyacetone phosphate to form quinolinate. The chain is Quinolinate synthase from Xylella fastidiosa (strain Temecula1 / ATCC 700964).